The sequence spans 373 residues: Histidinol-phosphate aminotransferase (373 aa).

N6-(pyridoxal phosphate)lysine is present on Lys230.

Belongs to the class-II pyridoxal-phosphate-dependent aminotransferase family. Histidinol-phosphate aminotransferase subfamily. In terms of assembly, homodimer. Pyridoxal 5'-phosphate serves as cofactor.

The catalysed reaction is L-histidinol phosphate + 2-oxoglutarate = 3-(imidazol-4-yl)-2-oxopropyl phosphate + L-glutamate. Its pathway is amino-acid biosynthesis; L-histidine biosynthesis; L-histidine from 5-phospho-alpha-D-ribose 1-diphosphate: step 7/9. In Synechococcus elongatus (strain ATCC 33912 / PCC 7942 / FACHB-805) (Anacystis nidulans R2), this protein is Histidinol-phosphate aminotransferase.